The primary structure comprises 398 residues: 2-epi-5-epi-valiolone synthase (398 aa).

NAD(+) is bound by residues Asp62, 93-96 (ETVK), 126-130 (GVLMD), 150-151 (TT), Lys163, Lys172, and 190-193 (FLAT). Residue Lys163 is part of the active site. A divalent metal cation contacts are provided by Glu205, His276, and His292.

This sequence belongs to the sugar phosphate cyclases superfamily. EEVS family. NAD(+) is required as a cofactor. Requires Co(2+) as cofactor.

It carries out the reaction D-sedoheptulose 7-phosphate = 2-epi-5-epi-valiolone + phosphate. Catalyzes the cyclization of D-sedoheptulose 7-phosphate to 2-epi-5-epi-valiolone. Does not use ido-heptulose 7-phosphate and 3-deoxy-arabino-heptulosonate 7-phosphate. Involved in the biosynthesis of the acarviose moiety of the alpha-glucosidase inhibitor acarbose. This Actinoplanes sp. (strain ATCC 31044 / CBS 674.73 / SE50/110) protein is 2-epi-5-epi-valiolone synthase.